The following is a 300-amino-acid chain: GTPase Era (300 aa).

In terms of domain architecture, Era-type G spans 6–173; that stretch reads KSGFLSIIGR…VDVLKEHLPE (168 aa). Positions 14–21 are G1; that stretch reads GRPNVGKS. Position 14–21 (14–21) interacts with GTP; the sequence is GRPNVGKS. Residues 40–44 form a G2 region; the sequence is QTTRN. The segment at 61-64 is G3; it reads DTPG. GTP is bound by residues 61–65 and 123–126; these read DTPGI and NKID. Positions 123–126 are G4; it reads NKID. Residues 152–154 form a G5 region; it reads ISA. The 78-residue stretch at 204-281 folds into the KH type-2 domain; that stretch reads TKEEVPHSIA…YLELWIKVKK (78 aa).

This sequence belongs to the TRAFAC class TrmE-Era-EngA-EngB-Septin-like GTPase superfamily. Era GTPase family. In terms of assembly, monomer.

It is found in the cytoplasm. The protein resides in the cell membrane. Functionally, an essential GTPase that binds both GDP and GTP, with rapid nucleotide exchange. Plays a role in 16S rRNA processing and 30S ribosomal subunit biogenesis and possibly also in cell cycle regulation and energy metabolism. This is GTPase Era from Oceanobacillus iheyensis (strain DSM 14371 / CIP 107618 / JCM 11309 / KCTC 3954 / HTE831).